A 493-amino-acid polypeptide reads, in one-letter code: Beta-hexosaminidase Amuc_2018 (493 aa).

Positions 1–21 are cleaved as a signal peptide; the sequence is MARPLPILGGILLSFSPPAEA. Substrate is bound at residue Arg122. Active-site charge relay system residues include Asp151 and His214. The Zn(2+) site is built by Cys227 and Cys247. Residue Asp278 coordinates substrate. Glu279 functions as the Charge relay system in the catalytic mechanism. 2 residues coordinate Zn(2+): Cys288 and Cys291. Substrate is bound by residues Trp345, 373–375, and 421–423; these read YLD and WAE.

Belongs to the glycosyl hydrolase 20 family.

It catalyses the reaction Hydrolysis of terminal non-reducing N-acetyl-D-hexosamine residues in N-acetyl-beta-D-hexosaminides.. With respect to regulation, significantly inhibited by the addition of sodium dodecyl sulfate (SDS), but not by EDTA, urea, 2-mercaptoethanol or Triton X-100. Strongly inhibited by Cu2(+) ions, in case of which the activity is decreased by 70%. No significant inhibition with Al(3+), Fe(3+), Ca(2+), Cd(2+), Mg(2+), Mn(2+), Ni(2+) and Zn(2+) ions. Strongly inhibited by PugNAc (O-(2-acetamido-2-deoxy-D-glucopyranosylideneamino) N-phenylcarbamate) in the sub-micromolar concentration range. PugNAc at a concentration of 0.5 mM decreases the activity by 50% and the addition of 1 mM PugNAc fully inhibits the enzyme. No significant reduction in the activity by alkylation using N-ethylmaleimide or 2-iodoacetamide. Hydrolyzes terminal GlcNAc residues from terminally unbranched N-glycans and from chitobiose. Hydrolyzes beta-1,6-linked N-acetylglucosamine and beta-1,4-linked N-acetylgalactosamine from pNP-alpha-GalNAc[beta1,3Gal]beta1,6GlcNAc and pNP-beta-GlcNAc-beta1,4-GalNAc substrates, respectively, as well as beta-1,2-linked N-acetylglucosamine units from the non-reducing end of N-glycans. Hydrolyzes GlcNAc residues linked to alpha1,3- or alpha1,6-mannose branch, but has low activity on substrates with more than one GlcNAc residue on one of the mannose branches. Releases terminal GlcNAc moieties from the N-glycopeptide Gly-Glu-Asn-(GlcNAc2Man3GlcNAc2)-Arg with high efficiency. Has moderate hydrolytic activity on the chitobiose moiety of N-glycopeptide substrate Gly-Glu-Asn-(GlcNAc2)-Arg. Does not hydrolyze GlcNAc residues from N-glycan structures bearing a bisecting GlcNAc moiety (beta1,4-linked GlcNAc to the beta1,4-linked core mannose). Potentially capable of cleaving the specific glycoside linkages in the process of mucin degradation in human intestinal tract. Hydrolyzes synthetic substrate pNP-beta-GlcNAc with high activity and pNP-beta-GalNAc to a lesser extent. Does not hydrolyze pNP-beta-glucose, pNP-beta-galactose, pNP-alpha-glucose, pNP-alpha-galactose, pNP-alpha-GlcNAc or pNP-alpha-fucose. This Akkermansia muciniphila (strain ATCC BAA-835 / DSM 22959 / JCM 33894 / BCRC 81048 / CCUG 64013 / CIP 107961 / Muc) protein is Beta-hexosaminidase Amuc_2018.